The following is a 703-amino-acid chain: uncharacterized protein (703 aa).

Positions 1-23 (MKQIMIFLTSFMLLAMTGQTALA) are cleaved as a signal peptide. The chain crosses the membrane as a helical span at residues 673–693 (MYIGVLALIMVVAAVFIWIAV).

The protein resides in the cell membrane. This is an uncharacterized protein from Bacillus subtilis (strain 168).